A 451-amino-acid chain; its full sequence is Tubulin alpha-2 chain (451 aa).

GTP is bound at residue Q11. N6-acetyllysine is present on K40. Positions 71, 144, 145, 179, 206, and 228 each coordinate GTP. E71 is a Mg(2+) binding site. The active site involves E254.

This sequence belongs to the tubulin family. As to quaternary structure, dimer of alpha and beta chains. A typical microtubule is a hollow water-filled tube with an outer diameter of 25 nm and an inner diameter of 15 nM. Alpha-beta heterodimers associate head-to-tail to form protofilaments running lengthwise along the microtubule wall with the beta-tubulin subunit facing the microtubule plus end conferring a structural polarity. Microtubules usually have 13 protofilaments but different protofilament numbers can be found in some organisms and specialized cells. It depends on Mg(2+) as a cofactor. In terms of processing, undergoes a tyrosination/detyrosination cycle, the cyclic removal and re-addition of a C-terminal tyrosine residue by the enzymes tubulin tyrosine carboxypeptidase (TTCP) and tubulin tyrosine ligase (TTL), respectively. Post-translationally, acetylation of alpha chains at Lys-40 stabilizes microtubules and affects affinity and processivity of microtubule motors. This modification has a role in multiple cellular functions, ranging from cell motility, cell cycle progression or cell differentiation to intracellular trafficking and signaling.

Its subcellular location is the cytoplasm. It is found in the cytoskeleton. It catalyses the reaction GTP + H2O = GDP + phosphate + H(+). In terms of biological role, tubulin is the major constituent of microtubules, a cylinder consisting of laterally associated linear protofilaments composed of alpha- and beta-tubulin heterodimers. Microtubules grow by the addition of GTP-tubulin dimers to the microtubule end, where a stabilizing cap forms. Below the cap, tubulin dimers are in GDP-bound state, owing to GTPase activity of alpha-tubulin. This is Tubulin alpha-2 chain (TUBA2) from Zea mays (Maize).